Consider the following 205-residue polypeptide: High frequency lysogenization protein HflD homolog (205 aa).

Belongs to the HflD family.

Its subcellular location is the cytoplasm. The protein localises to the cell inner membrane. The sequence is that of High frequency lysogenization protein HflD homolog from Shewanella baltica (strain OS185).